The sequence spans 430 residues: N-lysine methyltransferase SMYD2-A (430 aa).

The SET domain occupies 5–239 (EGLERFDSPG…AGDEVFTSYI (235 aa)). 15–17 (KGR) contributes to the S-adenosyl-L-methionine binding site. The Zn(2+) site is built by Cys-50, Cys-53, Cys-63, Cys-66, Cys-72, Cys-76, His-84, and Cys-88. The segment at 50 to 88 (CDFCFARKEGLSKCGKCKQAFYCNVDCQKGDWPMHKLEC) adopts an MYND-type zinc-finger fold. S-adenosyl-L-methionine contacts are provided by residues His-135, 204–205 (NH), and 256–258 (YFF).

It belongs to the class V-like SAM-binding methyltransferase superfamily.

The protein localises to the cytoplasm. Its subcellular location is the cytosol. It is found in the nucleus. The catalysed reaction is L-lysyl(4)-[histone H3] + 3 S-adenosyl-L-methionine = N(6),N(6),N(6)-trimethyl-L-lysyl(4)-[histone H3] + 3 S-adenosyl-L-homocysteine + 3 H(+). The enzyme catalyses L-lysyl-[protein] + S-adenosyl-L-methionine = N(6)-methyl-L-lysyl-[protein] + S-adenosyl-L-homocysteine + H(+). In terms of biological role, protein-lysine N-methyltransferase that methylates both histones and non-histone proteins, including p53/TP53 and RB1. Specifically trimethylates histone H3 'Lys-4' (H3K4me3) in vivo. The activity requires interaction with HSP90alpha. Shows even higher methyltransferase activity on p53/TP53. Monomethylates 'Lys-370' of p53/TP53, leading to decreased DNA-binding activity and subsequent transcriptional regulation activity of p53/TP53. Monomethylates RB1 at 'Lys-860'. This Xenopus laevis (African clawed frog) protein is N-lysine methyltransferase SMYD2-A (smyd2-a).